Reading from the N-terminus, the 643-residue chain is Inorganic pyrophosphatase TTM1 (643 aa).

The transit peptide at 1–15 (MALDSSVALSPRRRH) directs the protein to the mitochondrion. Residues 248 to 410 (NPTYILKSSK…PHTYIEQIQL (163 aa)) enclose the CYTH domain. Residues 618–638 (LESSTVPILLGLAIGCVGIFA) form a helical membrane-spanning segment.

Mg(2+) is required as a cofactor. As to expression, ubiquitously expressed in all tissues, with strong expression detected in senescent leaves.

It localises to the mitochondrion outer membrane. It catalyses the reaction diphosphate + H2O = 2 phosphate + H(+). In terms of biological role, exhibits pyrophosphatase activity with stronger affinity for pyrophosphate (PPi), moderate affinity for ATP and ADP, and weak affinity for tripolyphosphate (PPPi). No activity observed toward uridine substrate. Positively regulates natural and dark-induced leaf senescence. The sequence is that of Inorganic pyrophosphatase TTM1 from Arabidopsis thaliana (Mouse-ear cress).